The following is a 188-amino-acid chain: Ribonuclease HII (188 aa).

The 183-residue stretch at 6–188 folds into the RNase H type-2 domain; sequence KPLCGIDEAG…VKGLDEPTLF (183 aa). Residues Asp12, Glu13, and Asp99 each coordinate a divalent metal cation.

Belongs to the RNase HII family. Requires Mn(2+) as cofactor. Mg(2+) is required as a cofactor.

It is found in the cytoplasm. It carries out the reaction Endonucleolytic cleavage to 5'-phosphomonoester.. In terms of biological role, endonuclease that specifically degrades the RNA of RNA-DNA hybrids. The protein is Ribonuclease HII of Sulfurovum sp. (strain NBC37-1).